We begin with the raw amino-acid sequence, 74 residues long: Putative defensin-like protein 128 (74 aa).

An N-terminal signal peptide occupies residues 1–24; the sequence is MSKLTNVVIFIVFFLGMMAKETQG. Disulfide bonds link cysteine 28/cysteine 72, cysteine 37/cysteine 56, cysteine 42/cysteine 66, and cysteine 46/cysteine 68.

It belongs to the DEFL family.

Its subcellular location is the secreted. This chain is Putative defensin-like protein 128 (LCR8), found in Arabidopsis thaliana (Mouse-ear cress).